Reading from the N-terminus, the 387-residue chain is Ferrochelatase (387 aa).

Positions 196 and 277 each coordinate Fe cation.

It belongs to the ferrochelatase family.

The protein localises to the cytoplasm. It catalyses the reaction heme b + 2 H(+) = protoporphyrin IX + Fe(2+). It participates in porphyrin-containing compound metabolism; protoheme biosynthesis; protoheme from protoporphyrin-IX: step 1/1. In terms of biological role, catalyzes the ferrous insertion into protoporphyrin IX. The protein is Ferrochelatase of Synechococcus elongatus (strain ATCC 33912 / PCC 7942 / FACHB-805) (Anacystis nidulans R2).